A 545-amino-acid polypeptide reads, in one-letter code: Chaperonin GroEL (545 aa).

Residues 29–32 (TMGP), lysine 50, 86–90 (DGTTT), glycine 414, 480–482 (NAA), and aspartate 496 each bind ATP.

The protein belongs to the chaperonin (HSP60) family. Forms a cylinder of 14 subunits composed of two heptameric rings stacked back-to-back. Interacts with the co-chaperonin GroES.

It is found in the cytoplasm. The enzyme catalyses ATP + H2O + a folded polypeptide = ADP + phosphate + an unfolded polypeptide.. Together with its co-chaperonin GroES, plays an essential role in assisting protein folding. The GroEL-GroES system forms a nano-cage that allows encapsulation of the non-native substrate proteins and provides a physical environment optimized to promote and accelerate protein folding. This Malacoplasma penetrans (strain HF-2) (Mycoplasma penetrans) protein is Chaperonin GroEL.